The primary structure comprises 959 residues: DNA-directed RNA polymerase subunit beta'' (959 aa).

The Zn(2+) site is built by Cys-211, Cys-288, Cys-295, and Cys-298.

This sequence belongs to the RNA polymerase beta' chain family. RpoC2 subfamily. As to quaternary structure, in plastids the minimal PEP RNA polymerase catalytic core is composed of four subunits: alpha, beta, beta', and beta''. When a (nuclear-encoded) sigma factor is associated with the core the holoenzyme is formed, which can initiate transcription. Zn(2+) is required as a cofactor.

It localises to the plastid. It is found in the apicoplast. It carries out the reaction RNA(n) + a ribonucleoside 5'-triphosphate = RNA(n+1) + diphosphate. In terms of biological role, DNA-dependent RNA polymerase catalyzes the transcription of DNA into RNA using the four ribonucleoside triphosphates as substrates. The sequence is that of DNA-directed RNA polymerase subunit beta'' from Plasmodium falciparum (isolate 3D7).